Reading from the N-terminus, the 688-residue chain is Alpha-1,4-glucan:maltose-1-phosphate maltosyltransferase (688 aa).

3 residues coordinate alpha-maltose 1-phosphate: lysine 289, glutamine 349, and aspartate 384. Catalysis depends on aspartate 420, which acts as the Nucleophile. Residue asparagine 421 participates in alpha-maltose 1-phosphate binding. The active-site Proton donor is glutamate 449. 560 to 561 contributes to the alpha-maltose 1-phosphate binding site; the sequence is KY.

The protein belongs to the glycosyl hydrolase 13 family. GlgE subfamily. Homodimer.

The enzyme catalyses alpha-maltose 1-phosphate + [(1-&gt;4)-alpha-D-glucosyl](n) = [(1-&gt;4)-alpha-D-glucosyl](n+2) + phosphate. In terms of biological role, maltosyltransferase that uses maltose 1-phosphate (M1P) as the sugar donor to elongate linear or branched alpha-(1-&gt;4)-glucans. Is involved in a branched alpha-glucan biosynthetic pathway from trehalose, together with TreS, Mak and GlgB. The protein is Alpha-1,4-glucan:maltose-1-phosphate maltosyltransferase of Rhodospirillum rubrum (strain ATCC 11170 / ATH 1.1.1 / DSM 467 / LMG 4362 / NCIMB 8255 / S1).